Here is a 100-residue protein sequence, read N- to C-terminus: Putative membrane protein insertion efficiency factor (100 aa).

It belongs to the UPF0161 family.

It is found in the cell membrane. Could be involved in insertion of integral membrane proteins into the membrane. The protein is Putative membrane protein insertion efficiency factor of Enterococcus faecalis (strain ATCC 700802 / V583).